The sequence spans 317 residues: E3 ubiquitin-protein ligase NRDP1 (317 aa).

An RING-type; degenerate zinc finger spans residues 18 to 57; that stretch reads CPICSGVLEEPVQAPHCEHAFCNACITQWFSQQQTCPVDR. The SIAH-type; degenerate zinc finger occupies 78-138; that stretch reads KLQIACDNAV…LPNHNCIKHL (61 aa).

Interacts with USP8, ERBB3, PRKN and BIRC6. Interacts with CSF2RB, EPOR, IL3RA, MYD88 and TBK1. Interacts with Clec16a. Autoubiquitinated. Autoubiquitination leads to proteasomal degradation. Deubiquitinated by USP8 to get stabilized which induces apoptosis.

It carries out the reaction S-ubiquitinyl-[E2 ubiquitin-conjugating enzyme]-L-cysteine + [acceptor protein]-L-lysine = [E2 ubiquitin-conjugating enzyme]-L-cysteine + N(6)-ubiquitinyl-[acceptor protein]-L-lysine.. Its pathway is protein modification; protein ubiquitination. In terms of biological role, acts as E3 ubiquitin-protein ligase and regulates the degradation of target proteins. Polyubiquitinates MYD88. Negatively regulates MYD88-dependent production of pro-inflammatory cytokines. Can promote TRIF-dependent production of type I interferon and inhibits infection with vesicular stomatitis virus. Also promotes activation of TBK1 and IRF3. Involved in the ubiquitination of erythropoietin (EPO) and interleukin-3 (IL-3) receptors. Thus, through maintaining basal levels of cytokine receptors, RNF41 is involved in the control of hematopoietic progenitor cell differentiation into myeloerythroid lineages. Contributes to the maintenance of steady-state ERBB3 levels by mediating its growth factor-independent degradation. Involved in the degradation of the inhibitor of apoptosis BIRC6 and thus is an important regulator of cell death by promoting apoptosis. Also acts as a PRKN modifier that accelerates its degradation, resulting in a reduction of PRKN activity, influencing the balance of intracellular redox state. The RNF41-PRKN pathway regulates autophagosome-lysosome fusion during late mitophagy. Mitophagy is a selective form of autophagy necessary for mitochondrial quality control. The polypeptide is E3 ubiquitin-protein ligase NRDP1 (Rnf41) (Mus musculus (Mouse)).